Here is a 206-residue protein sequence, read N- to C-terminus: Regulator of rDNA transcription 14 (206 aa).

The tract at residues 178-206 (FVKDHRYPGLTPGLAPVGLSDEEDSSEED) is disordered. Phosphoserine occurs at positions 197, 202, and 203. A compositionally biased stretch (acidic residues) spans 197-206 (SDEEDSSEED).

It belongs to the RRT14 family.

The protein localises to the nucleus. It is found in the nucleolus. Involved in ribosome biogenesis, probably through modulation of rDNA transcription. This is Regulator of rDNA transcription 14 (RRT14) from Saccharomyces cerevisiae (strain RM11-1a) (Baker's yeast).